Here is a 228-residue protein sequence, read N- to C-terminus: HTH-type transcriptional regulator ArcR (228 aa).

Residue 22-141 coordinates a nucleoside 3',5'-cyclic phosphate; sequence SYINIPVGVL…VKLFSLLSET (120 aa). Positions 155 to 228 constitute an HTH crp-type domain; that stretch reads KLAKERVTKI…SKNWLVSKDL (74 aa). The H-T-H motif DNA-binding region spans 188 to 207; it reads IQLLSDMAGISRETTSHIIN.

The protein localises to the cytoplasm. In terms of biological role, positively regulates the expression of the arcABDCR operon under anaerobic conditions, thus playing an essential role in arginine catabolism. May also control the expression of genes encoding proteins which are involved in anaerobic metabolism. Can bind cyclic AMP. The protein is HTH-type transcriptional regulator ArcR (arcR) of Staphylococcus epidermidis (strain ATCC 35984 / DSM 28319 / BCRC 17069 / CCUG 31568 / BM 3577 / RP62A).